Consider the following 123-residue polypeptide: Small ribosomal subunit protein uS12c (123 aa).

The disordered stretch occupies residues 9–31 (RNKRQAAENKTKSPALQRSPQRR).

It belongs to the universal ribosomal protein uS12 family. In terms of assembly, part of the 30S ribosomal subunit.

It localises to the plastid. It is found in the chloroplast. In terms of biological role, with S4 and S5 plays an important role in translational accuracy. Located at the interface of the 30S and 50S subunits. In Spirogyra maxima (Green alga), this protein is Small ribosomal subunit protein uS12c (rps12).